The following is a 199-amino-acid chain: NADH-quinone oxidoreductase subunit C (199 aa).

This sequence belongs to the complex I 30 kDa subunit family. In terms of assembly, NDH-1 is composed of 14 different subunits. Subunits NuoB, C, D, E, F, and G constitute the peripheral sector of the complex.

Its subcellular location is the cell inner membrane. It catalyses the reaction a quinone + NADH + 5 H(+)(in) = a quinol + NAD(+) + 4 H(+)(out). Its function is as follows. NDH-1 shuttles electrons from NADH, via FMN and iron-sulfur (Fe-S) centers, to quinones in the respiratory chain. The immediate electron acceptor for the enzyme in this species is believed to be ubiquinone. Couples the redox reaction to proton translocation (for every two electrons transferred, four hydrogen ions are translocated across the cytoplasmic membrane), and thus conserves the redox energy in a proton gradient. The chain is NADH-quinone oxidoreductase subunit C from Paramagnetospirillum magneticum (strain ATCC 700264 / AMB-1) (Magnetospirillum magneticum).